Reading from the N-terminus, the 137-residue chain is Venom allergen 4 (137 aa).

The first 19 residues, 1–19, serve as a signal peptide directing secretion; it reads MKTFVLVSCLLVFTQIIYA.

Belongs to the ant venom allergen 2/4 family. As to quaternary structure, monomer. As to expression, expressed by the venom gland.

It localises to the secreted. This chain is Venom allergen 4, found in Solenopsis geminata (Tropical fire ant).